The sequence spans 598 residues: Fumarate reductase flavoprotein subunit (598 aa).

Residues 12–16 (GAGGA), 36–38 (ISK), 44–52 (SHTVAAEGG), 156–158 (HFV), and aspartate 212 contribute to the FAD site. Residue histidine 45 is modified to Tele-8alpha-FAD histidine. Active-site residues include histidine 233 and arginine 249. Residues 356 to 357 (HY), glutamate 380, and 391 to 397 (RLGSNSL) contribute to the FAD site. Residues 577-598 (AKRVYGGEADAQEKSDKEQANG) form a disordered region. Basic and acidic residues predominate over residues 587–598 (AQEKSDKEQANG).

Belongs to the FAD-dependent oxidoreductase 2 family. FRD/SDH subfamily. In terms of assembly, part of an enzyme complex containing four subunits: a flavoprotein (FrdA), an iron-sulfur protein (FrdB), and two hydrophobic anchor proteins (FrdC and FrdD). Interacts with SdhE. FAD is required as a cofactor.

It localises to the cell inner membrane. The catalysed reaction is a quinone + succinate = fumarate + a quinol. It carries out the reaction a menaquinone + succinate = a menaquinol + fumarate. In terms of biological role, two distinct, membrane-bound, FAD-containing enzymes are responsible for the catalysis of fumarate and succinate interconversion; the fumarate reductase is used in anaerobic growth, and the succinate dehydrogenase is used in aerobic growth. This chain is Fumarate reductase flavoprotein subunit, found in Serratia sp. (strain ATCC 39006) (Prodigiosinella confusarubida).